The chain runs to 94 residues: Small ribosomal subunit protein eS24 (94 aa).

The protein belongs to the eukaryotic ribosomal protein eS24 family.

The sequence is that of Small ribosomal subunit protein eS24 from Nanoarchaeum equitans (strain Kin4-M).